Consider the following 828-residue polypeptide: Periplasmic nitrate reductase (828 aa).

A signal peptide (tat-type signal) is located at residues 1-31; that stretch reads MKLSRRSFMKANAVAAAAAAAGLSVPGVARA. The 4Fe-4S Mo/W bis-MGD-type domain occupies 39-95; that stretch reads IKWDKAPCRFCGTGCGVLVGTQQGRVVACQGDPDAPVNRGLNCIKGYFLPKIMYGKD. [4Fe-4S] cluster-binding residues include C46, C49, C53, and C81. Residues K83, Q150, N175, C179, 212–219, 243–247, 262–264, M372, Q376, N482, 508–509, K531, D558, and 718–727 contribute to the Mo-bis(molybdopterin guanine dinucleotide) site; these read WGANMAEM, STYQH, QSD, SD, and TGRVLEHWHT. F794 serves as a coordination point for substrate. Residues N802 and K819 each contribute to the Mo-bis(molybdopterin guanine dinucleotide) site.

This sequence belongs to the prokaryotic molybdopterin-containing oxidoreductase family. NasA/NapA/NarB subfamily. Component of the periplasmic nitrate reductase NapAB complex composed of NapA and NapB. Requires [4Fe-4S] cluster as cofactor. It depends on Mo-bis(molybdopterin guanine dinucleotide) as a cofactor. Predicted to be exported by the Tat system. The position of the signal peptide cleavage has not been experimentally proven.

Its subcellular location is the periplasm. The catalysed reaction is 2 Fe(II)-[cytochrome] + nitrate + 2 H(+) = 2 Fe(III)-[cytochrome] + nitrite + H2O. Its function is as follows. Catalytic subunit of the periplasmic nitrate reductase complex NapAB. Receives electrons from NapB and catalyzes the reduction of nitrate to nitrite. The sequence is that of Periplasmic nitrate reductase from Escherichia coli (strain K12 / MC4100 / BW2952).